The sequence spans 319 residues: Heavy metal-associated isoprenylated plant protein 9 (319 aa).

2 stretches are compositionally biased toward basic and acidic residues: residues 1–11 (MGEEVKPEAKE) and 24–45 (EEKK…KPKE). The interval 1 to 57 (MGEEVKPEAKEAASAPQAVPAEEEEKKKDVAEEKKVAAEEEKPKEEEEPQPPPPPPP) is disordered. Residues 21–48 (AEEEEKKKDVAEEKKVAAEEEKPKEEEE) are a coiled coil. 2 HMA domains span residues 55–118 (PPPF…KRMA) and 144–208 (LTTV…KQAR). A metal cation contacts are provided by C66, C69, C155, and C158. Residues 207–282 (ARIVPQPDPE…RDNEMTAMAQ (76 aa)) form a disordered region. Over residues 224-254 (QEEKKEESGEGNEKPPETGEEKEEEKKKEGE) the composition is skewed to basic and acidic residues. Acidic residues predominate over residues 255 to 268 (ENGEEGGGEEAAAT). C316 bears the Cysteine methyl ester mark. Residue C316 is the site of S-farnesyl cysteine attachment. Residues 317 to 319 (CIS) constitute a propeptide, removed in mature form.

Belongs to the HIPP family.

In terms of biological role, heavy-metal-binding protein. The chain is Heavy metal-associated isoprenylated plant protein 9 from Arabidopsis thaliana (Mouse-ear cress).